A 918-amino-acid polypeptide reads, in one-letter code: Probable lipoxygenase 6 (918 aa).

The segment at 56–76 (AASPSSGIKGGGAGERRPAPE) is disordered. The 129-residue stretch at 90–218 (QKEDIKEAVA…ELPTKRVFFS (129 aa)) folds into the PLAT domain. Residues 221–918 (PYLPSETPPG…CRGVPNSISI (698 aa)) enclose the Lipoxygenase domain. Residues H573, H578, H765, N769, and I918 each contribute to the Fe cation site.

This sequence belongs to the lipoxygenase family. The cofactor is Fe cation.

The enzyme catalyses (9Z,12Z)-octadecadienoate + O2 = (13S)-hydroperoxy-(9Z,11E)-octadecadienoate. It carries out the reaction (9Z,12Z,15Z)-octadecatrienoate + O2 = (13S)-hydroperoxy-(9Z,11E,15Z)-octadecatrienoate. It participates in lipid metabolism; oxylipin biosynthesis. Its function is as follows. Plant lipoxygenase may be involved in a number of diverse aspects of plant physiology including growth and development, pest resistance, and senescence or responses to wounding. Catalyzes the hydroperoxidation of lipids containing a cis,cis-1,4-pentadiene structure. This is Probable lipoxygenase 6 from Oryza sativa subsp. japonica (Rice).